We begin with the raw amino-acid sequence, 309 residues long: Jacalin-related lectin 25 (309 aa).

In terms of domain architecture, Jacalin-type lectin spans 8–190 (MFKVGPIGSQ…LTSIGIYVCP (183 aa)).

It belongs to the jacalin lectin family.

This is Jacalin-related lectin 25 (JAL25) from Arabidopsis thaliana (Mouse-ear cress).